A 573-amino-acid chain; its full sequence is DEAD-box ATP-dependent RNA helicase 47A (573 aa).

A Q motif motif is present at residues 131–159 (KSFEELGLPPLLIDRLNKEGLTAPTEVQS). The Helicase ATP-binding domain maps to 162 to 362 (IPIISQKHDA…RSWGHDPVLV (201 aa)). 175–182 (SYTGSGKT) serves as a coordination point for ATP. The DEAD box signature appears at 293-296 (DEVD). The region spanning 421 to 565 (TLRRCIHALE…PCEFTEGKLL (145 aa)) is the Helicase C-terminal domain.

This sequence belongs to the DEAD box helicase family.

The catalysed reaction is ATP + H2O = ADP + phosphate + H(+). The sequence is that of DEAD-box ATP-dependent RNA helicase 47A from Oryza sativa subsp. japonica (Rice).